The primary structure comprises 1627 residues: Pappalysin-1 (1627 aa).

An N-terminal signal peptide occupies residues 1 to 22 (MRLWSWVLHLGLLSAALGCGLA). The propeptide occupies 23–81 (ERPRRARRDPRAGRPPRPAAGPATCATRAARGRRASPPPPPPPGGAWEAVRVPRRRQQR). The tract at residues 23–99 (ERPRRARRDP…PSPPSRALYF (77 aa)) is disordered. Positions 42–51 (AGPATCATRA) are enriched in low complexity. Cystine bridges form between C144/C235, C327/C622, C332/C657, C414/C428, C424/C440, C457/C473, C474/C485, C583/C600, C587/C612, C710/C878, C713/C881, C753/C835, C775/C781, C947/C975, C960/C971, C983/C990, and C999/C1011. The segment at 272–583 (METHGAHTAL…FRGISEIQSC (312 aa)) is metalloprotease. N-linked (GlcNAc...) asparagine glycans are attached at residues N390 and N402. N-linked (GlcNAc...) asparagine glycosylation occurs at N429. Residue N480 is glycosylated (N-linked (GlcNAc...) asparagine). H562 contributes to the Zn(2+) binding site. E563 is an active-site residue. Residues H566 and H572 each coordinate Zn(2+). N601, N619, and N725 each carry an N-linked (GlcNAc...) asparagine glycan. Residues 733–754 (SPSGHWSPREAEGHPDVEQPCK) form a disordered region. The span at 739-751 (SPREAEGHPDVEQ) shows a compositional bias: basic and acidic residues. N825 is a glycosylation site (N-linked (GlcNAc...) asparagine). N1026 carries an N-linked (GlcNAc...) asparagine glycan. 19 disulfides stabilise this stretch: C1036-C1070, C1051-C1139, C1192-C1205, C1215-C1269, C1227-C1238, C1242-C1280, C1285-C1329, C1300-C1310, C1314-C1342, C1346-C1399, C1362-C1373, C1377-C1410, C1415-C1458, C1428-C1438, C1442-C1471, C1478-C1539, C1492-C1502, C1506-C1554, and C1558-C1576. Sushi domains follow at residues 1213-1282 (TDCP…ACEP), 1283-1344 (VDCS…LCEL), 1345-1412 (MCLA…ACVP), 1413-1473 (VTCD…VCQE), and 1476-1556 (GQCS…HCVK). 2 N-linked (GlcNAc...) asparagine glycosylation sites follow: N1222 and N1226. The N-linked (GlcNAc...) asparagine glycan is linked to N1323. N1465 is a glycosylation site (N-linked (GlcNAc...) asparagine). An N-linked (GlcNAc...) asparagine glycan is attached at N1519.

It belongs to the peptidase M43B family. As to quaternary structure, homodimer; disulfide-linked. In pregnancy serum, predominantly found as a disulfide-linked 2:2 heterotetramer with the proform of PRG2. It depends on Zn(2+) as a cofactor. There appear to be no free sulfhydryl groups. In terms of tissue distribution, high levels in placenta and pregnancy serum. In placenta, expressed in X cells in septa and anchoring villi, and in syncytiotrophoblasts in the chorionic villi. Lower levels are found in a variety of other tissues including kidney, myometrium, endometrium, ovaries, breast, prostate, bone marrow, colon, fibroblasts and osteoblasts.

It is found in the secreted. It carries out the reaction Cleavage of the 135-Met-|-Lys-136 bond in insulin-like growth factor binding protein (IGFBP)-4, and the 143-Ser-|-Lys-144 bond in IGFBP-5.. Inhibited by complexation with the proform of PRG2. Functionally, metalloproteinase which specifically cleaves IGFBP-4 and IGFBP-5, resulting in release of bound IGF. Cleavage of IGFBP-4 is dramatically enhanced by the presence of IGF, whereas cleavage of IGFBP-5 is slightly inhibited by the presence of IGF. The polypeptide is Pappalysin-1 (PAPPA) (Homo sapiens (Human)).